Consider the following 142-residue polypeptide: Transcription antitermination protein NusB (142 aa).

This sequence belongs to the NusB family.

Functionally, involved in transcription antitermination. Required for transcription of ribosomal RNA (rRNA) genes. Binds specifically to the boxA antiterminator sequence of the ribosomal RNA (rrn) operons. The protein is Transcription antitermination protein NusB of Borreliella burgdorferi (strain ATCC 35210 / DSM 4680 / CIP 102532 / B31) (Borrelia burgdorferi).